We begin with the raw amino-acid sequence, 274 residues long: uncharacterized protein (274 aa).

Residue 104 to 111 participates in ATP binding; the sequence is GVFAIGKS.

This is an uncharacterized protein from Mycoplasma genitalium (strain ATCC 33530 / DSM 19775 / NCTC 10195 / G37) (Mycoplasmoides genitalium).